The following is a 488-amino-acid chain: MSQAVESRTRIKSERYESGVIPYAKMGYWDPEYVIKDTDILALFRCTPQPGVDPVEAAAALAGESSTATWTVVWTDLLTACDLYRAKAFRVDPVPSAADTYFCYIAYDIDLFEEGSLANLTASIIGNIFGFKAVKALRLEDMRFPVALLKTYQGPATGVVVERERMDKFGRPLLGATVKPKLGLSGKNYGRVVFEGLKGGLDFLKDDENINSQPFMRYRERFLYSMEGVNHAACLTGEVKGHYLNTTAATMEDMYERANFARDLGSVIVMIDLVIGYTAIQSMGKWSRDNDVILHLHRAGNSTYSRQKNHGMNFRVICKWMRMSGCDHIHAGTVVGKLEGDPLMIKGFYNTLLDTKTEVNLPQGLFFAQDWASLRKCVPVASGGIHCGQMHQLINYLGDDVVLQFGGGTIGHPDGIQAGATANRVALECMVLARNEGRDYIAEGPQILRDAAKTCGPLQTALDLWKDITFNYASTDTADFVETATANV.

Positions 127 and 177 each coordinate substrate. The active-site Proton acceptor is K179. Substrate is bound at residue K181. Mg(2+) is bound by residues K205, D207, and E208. K205 bears the N6-carboxylysine mark. H297 serves as the catalytic Proton acceptor. Positions 298, 330, and 382 each coordinate substrate.

Belongs to the RuBisCO large chain family. Type I subfamily. Heterohexadecamer of 8 large chains and 8 small chains. Mg(2+) is required as a cofactor.

The protein resides in the plastid. Its subcellular location is the chloroplast. The catalysed reaction is 2 (2R)-3-phosphoglycerate + 2 H(+) = D-ribulose 1,5-bisphosphate + CO2 + H2O. It carries out the reaction D-ribulose 1,5-bisphosphate + O2 = 2-phosphoglycolate + (2R)-3-phosphoglycerate + 2 H(+). Functionally, ruBisCO catalyzes two reactions: the carboxylation of D-ribulose 1,5-bisphosphate, the primary event in carbon dioxide fixation, as well as the oxidative fragmentation of the pentose substrate in the photorespiration process. Both reactions occur simultaneously and in competition at the same active site. This is Ribulose bisphosphate carboxylase large chain from Emiliania huxleyi (Coccolithophore).